Consider the following 437-residue polypeptide: Inactive peptidyl-prolyl cis-trans isomerase shutdown (437 aa).

A PPIase FKBP-type domain is found at 92-178 (DSEVTIHYAA…RPEPALFVIV (87 aa)). TPR repeat units follow at residues 209–242 (VNAL…LRLS), 258–294 (VNAY…EKHC), and 295–327 (KALY…EPKN).

This sequence belongs to the FKBP6 family. Interacts with Hsp83.

The protein localises to the cytoplasm. Its function is as follows. Co-chaperone required during oogenesis to repress transposable elements and prevent their mobilization, which is essential for the germline integrity. Acts via the piRNA metabolic process, which mediates the repression of transposable elements during meiosis by forming complexes composed of piRNAs and Piwi proteins and govern the methylation and subsequent repression of transposons. Acts as a co-chaperone via its interaction with Hsp83/HSP90 and is required for the biogenesis of all three piRNA major populations. In Bombyx mori (Silk moth), this protein is Inactive peptidyl-prolyl cis-trans isomerase shutdown (shu).